Here is a 244-residue protein sequence, read N- to C-terminus: MSIRFTHCFTSSSSLPCYILRHLPFSNFNRYSTASHDNVNAFRLLMRRFAQPVVIITSGFADGHRAGMTASSFTPVSLTPNPVISFNIKIPSRTANAIQQSNRVIVHLLSSSIKKHSEWASLLAKQKHQINPLMNSEKNSTSVEDLPGSNRTQQTSSHSLLHPLHPIDVSLSKEGLPCLVDSLGLLHCSIIHSYQVQDHILFVANVERVEHGSSPLESSSGLVYYNRNYCSTSPLSPIIDSFES.

The interval 131–158 (NPLMNSEKNSTSVEDLPGSNRTQQTSSH) is disordered. Residues 132–158 (PLMNSEKNSTSVEDLPGSNRTQQTSSH) are compositionally biased toward polar residues.

It localises to the mitochondrion. The catalysed reaction is a reduced flavin + NAD(+) = an oxidized flavin + NADH + 2 H(+). Functionally, NADH-dependent flavin reductase that acts in the coenzyme Q biosynthetic pathway. Required for synthesis of the p-hydroxybenzoic acid (PHB) precursor to form a quinone backbone. This is NAD reductase coq12 from Schizosaccharomyces pombe (strain 972 / ATCC 24843) (Fission yeast).